We begin with the raw amino-acid sequence, 139 residues long: uncharacterized protein (139 aa).

Residues 3–110 form the HIT domain; sequence IFCNIVEGRD…VPTWSQDPDI (108 aa). The Histidine triad motif signature appears at 95–99; that stretch reads HSHFH.

This is an uncharacterized protein from Saccharolobus solfataricus (strain ATCC 35092 / DSM 1617 / JCM 11322 / P2) (Sulfolobus solfataricus).